A 61-amino-acid chain; its full sequence is Chi-conotoxin MrIA (61 aa).

The signal sequence occupies residues 1–19 (MRCLPVLIILLLLTASAPG). Residues 20-48 (VVVLPKTEDDVPMSSVYGNGKSILRGILR) constitute a propeptide that is removed on maturation. 2 cysteine pairs are disulfide-bonded: Cys-52-Cys-61 and Cys-53-Cys-58. Pro-60 is modified (4-hydroxyproline).

This sequence belongs to the conotoxin T superfamily. Expressed by the venom duct.

The protein resides in the secreted. Its function is as follows. Chi-conotoxins inhibit the neuronal noradrenaline transporter (NET/SLC6A2). Activity has been described on both human (inhibition of norepinephrine uptake is IC(50)=1.26 uM) and rat (pIC(50)=6.21 corresponding IC(50)=0.16 uM) transporters. Acts as a reversible non-competitive inhibitor. This is Chi-conotoxin MrIA from Conus marmoreus (Marble cone).